The following is a 501-amino-acid chain: Tegument protein US24 (501 aa).

This sequence belongs to the herpesviridae US22 family.

Its subcellular location is the virion tegument. The sequence is that of Tegument protein US24 (US24) from Human cytomegalovirus (strain AD169) (HHV-5).